The following is a 131-amino-acid chain: Small ribosomal subunit protein uS11 (131 aa).

This sequence belongs to the universal ribosomal protein uS11 family. Part of the 30S ribosomal subunit. Interacts with proteins S7 and S18. Binds to IF-3.

Functionally, located on the platform of the 30S subunit, it bridges several disparate RNA helices of the 16S rRNA. Forms part of the Shine-Dalgarno cleft in the 70S ribosome. This is Small ribosomal subunit protein uS11 from Bacillus licheniformis (strain ATCC 14580 / DSM 13 / JCM 2505 / CCUG 7422 / NBRC 12200 / NCIMB 9375 / NCTC 10341 / NRRL NRS-1264 / Gibson 46).